A 212-amino-acid polypeptide reads, in one-letter code: Thymidylate kinase (212 aa).

Position 10–17 (10–17 (GLEGAGKT)) interacts with ATP.

The protein belongs to the thymidylate kinase family.

The enzyme catalyses dTMP + ATP = dTDP + ADP. Its function is as follows. Phosphorylation of dTMP to form dTDP in both de novo and salvage pathways of dTTP synthesis. The protein is Thymidylate kinase of Photorhabdus laumondii subsp. laumondii (strain DSM 15139 / CIP 105565 / TT01) (Photorhabdus luminescens subsp. laumondii).